The sequence spans 499 residues: Serine/threonine-protein phosphatase 5 (499 aa).

Residues 1–24 (MAMAEGERTECAETPRDEPPADGT) form a disordered region. At Ala2 the chain carries N-acetylalanine. TPR repeat units follow at residues 28–61 (AEEL…NPGN), 62–95 (AIYY…DKKY), and 96–129 (IKGY…KPND). The tract at residues 184-499 (GKVTITFMKD…ANTLLQLGMM (316 aa)) is catalytic. 3 residues coordinate Mn(2+): Asp242, His244, and Asp271. Residue His244 coordinates substrate. Substrate is bound by residues Arg275 and 303 to 304 (NH). A Mn(2+)-binding site is contributed by Asn303. His304 acts as the Proton donor/acceptor in catalysis. His352 contacts Mn(2+). Substrate-binding residues include Arg400 and His427. Residue His427 participates in Mn(2+) binding. A required for autoinhibition region spans residues 495-499 (QLGMM).

This sequence belongs to the PPP phosphatase family. PP-5 (PP-T) subfamily. In terms of assembly, probably forms a complex composed of chaperones HSP90 and HSP70, co-chaperones STIP1/HOP, CDC37, PPP5C, PTGES3/p23, TSC1 and client protein TSC2. Probably forms a complex composed of chaperones HSP90 and HSP70, co-chaperones CDC37, PPP5C, TSC1 and client protein TSC2, CDK4, AKT, RAF1 and NR3C1; this complex does not contain co-chaperones STIP1/HOP and PTGES3/p23. Part of a complex with HSP90/HSP90AA1 and steroid receptors. Interacts (via TPR repeats) with HSP90AA1 (via TPR repeat-binding motif) or HSPA1A/HSPA1B; the interaction is direct and activates the phosphatase activity. Dissociates from HSPA1A/HSPA1B and HSP90AA1 in response to arachidonic acid. Interacts with CPNE1 (via VWFA domain). Interacts with CDC16, CDC27. Interacts with KLHDC10 (via the 6 Kelch repeats); inhibits the phosphatase activity on MAP3K5. Interacts with ATM and ATR; both interactions are induced by DNA damage and enhance ATM and ATR kinase activity. Interacts with RAD17; reduced by DNA damage. Interacts with nuclear receptors such as NR3C1/GCR and PPARG (activated by agonist); regulates their transactivation activities. Interacts (via TPR repeats) with S100 proteins S100A1, S100A2, S100A6, S100B and S100P; the interactions are calcium-dependent, strongly activate PPP5C phosphatase activity and compete with HSP90AA1 and MAP3K5 interactions. Interacts with SMAD2 and SMAD3 but not with SMAD1; decreases SMAD3 phosphorylation and protein levels. Interacts (via TPR repeats) with CRY1 and CRY2; the interaction with CRY2 down-regulates the phosphatase activity on CSNK1E. Interacts (via TPR repeats) with the active form of RAC1, GNA12 or GNA13; these interactions activate the phosphatase activity and translocate PPP5C to the cell membrane. Interacts with FLCN. Mg(2+) is required as a cofactor. The cofactor is Mn(2+). Post-translationally, activated by at least two different proteolytic cleavages producing a 56 kDa and a 50 kDa form. Expressed in liver (at protein level) and brain, enriched in suprachiasmatic nuclei.

The protein localises to the nucleus. Its subcellular location is the cytoplasm. It localises to the cell membrane. The enzyme catalyses O-phospho-L-seryl-[protein] + H2O = L-seryl-[protein] + phosphate. The catalysed reaction is O-phospho-L-threonyl-[protein] + H2O = L-threonyl-[protein] + phosphate. With respect to regulation, autoinhibited. In the autoinhibited state, the TPR domain interacts with the catalytic region and prevents substrate access to the catalytic pocket. Allosterically activated by various polyunsaturated fatty acids, free long-chain fatty-acids and long-chain fatty acyl-CoA esters, arachidonic acid being the most effective activator. HSP90A and probably RAC1, GNA12 and GNA13 can also release the autoinhibition by the TPR repeat. Activation by RAC1, GNA12 and GNA13 is synergistic with the one produced by fatty acids binding. Inhibited by okadaic acid. Serine/threonine-protein phosphatase that dephosphorylates a myriad of proteins involved in different signaling pathways including the kinases CSNK1E, ASK1/MAP3K5, PRKDC and RAF1, the nuclear receptors NR3C1, PPARG, ESR1 and ESR2, SMAD proteins and TAU/MAPT. Implicated in wide ranging cellular processes, including apoptosis, differentiation, DNA damage response, cell survival, regulation of ion channels or circadian rhythms, in response to steroid and thyroid hormones, calcium, fatty acids, TGF-beta as well as oxidative and genotoxic stresses. Participates in the control of DNA damage response mechanisms such as checkpoint activation and DNA damage repair through, for instance, the regulation ATM/ATR-signaling and dephosphorylation of PRKDC and TP53BP1. Inhibits ASK1/MAP3K5-mediated apoptosis induced by oxidative stress. Plays a positive role in adipogenesis, mainly through the dephosphorylation and activation of PPARG transactivation function. Also dephosphorylates and inhibits the anti-adipogenic effect of NR3C1. Regulates the circadian rhythms, through the dephosphorylation and activation of CSNK1E. May modulate TGF-beta signaling pathway by the regulation of SMAD3 phosphorylation and protein expression levels. Dephosphorylates and may play a role in the regulation of TAU/MAPT. Through their dephosphorylation, may play a role in the regulation of ions channels such as KCNH2. Dephosphorylate FNIP1, disrupting interaction with HSP90AA1/Hsp90. This Mus musculus (Mouse) protein is Serine/threonine-protein phosphatase 5 (Ppp5c).